We begin with the raw amino-acid sequence, 176 residues long: T cell receptor beta constant 1 (176 aa).

The region spanning 8-117 (PEVAVFEPSE…WTQDRAKPVT (110 aa)) is the Ig-like C1-type domain. Cysteines 30 and 95 form a disulfide. A glycan (N-linked (GlcNAc...) asparagine) is linked at asparagine 69. The connecting peptide stretch occupies residues 130–144 (CGFTSVSYQQGVLSA). Residues 150-170 (ILLGKATLYAVLVSALVLMAM) form a helical membrane-spanning segment. Topologically, residues 171-176 (VKRKDF) are cytoplasmic.

Alpha-beta TR is a heterodimer composed of an alpha and beta chain; disulfide-linked. The alpha-beta TR is associated with the transmembrane signaling CD3 coreceptor proteins to form the TR-CD3 (TcR or TCR). The assembly of alpha-beta TR heterodimers with CD3 occurs in the endoplasmic reticulum where a single alpha-beta TR heterodimer associates with one CD3D-CD3E heterodimer, one CD3G-CD3E heterodimer and one CD247 homodimer forming a stable octameric structure. CD3D-CD3E and CD3G-CD3E heterodimers preferentially associate with TR alpha and TR beta chains, respectively. The association of the CD247 homodimer is the last step of TcR assembly in the endoplasmic reticulum and is required for transport to the cell surface.

The protein resides in the cell membrane. Constant region of T cell receptor (TR) beta chain. Alpha-beta T cell receptors are antigen specific receptors which are essential to the immune response and are present on the cell surface of T lymphocytes. Recognize peptide-major histocompatibility (MH) (pMH) complexes that are displayed by antigen presenting cells (APC), a prerequisite for efficient T cell adaptive immunity against pathogens. Binding of alpha-beta TR to pMH complex initiates TR-CD3 clustering on the cell surface and intracellular activation of LCK that phosphorylates the ITAM motifs of CD3G, CD3D, CD3E and CD247 enabling the recruitment of ZAP70. In turn, ZAP70 phosphorylates LAT, which recruits numerous signaling molecules to form the LAT signalosome. The LAT signalosome propagates signal branching to three major signaling pathways, the calcium, the mitogen-activated protein kinase (MAPK) kinase and the nuclear factor NF-kappa-B (NF-kB) pathways, leading to the mobilization of transcription factors that are critical for gene expression and essential for T cell growth and differentiation. The T cell repertoire is generated in the thymus, by V-(D)-J rearrangement. This repertoire is then shaped by intrathymic selection events to generate a peripheral T cell pool of self-MH restricted, non-autoaggressive T cells. Post-thymic interaction of alpha-beta TR with the pMH complexes shapes TR structural and functional avidity. The polypeptide is T cell receptor beta constant 1 (Homo sapiens (Human)).